The primary structure comprises 21 residues: Azemiopsin (21 aa).

Pro residues predominate over residues 1–14 (DNWWPKPPHQGPRP). A disordered region spans residues 1-21 (DNWWPKPPHQGPRPPRPRPKP). Implicated in receptor binding regions lie at residues 3 to 6 (WWPK), 8 to 11 (PHQG), and 13 to 14 (RP).

As to quaternary structure, monomer. In terms of tissue distribution, expressed by the venom gland.

It is found in the secreted. In terms of biological role, in vitro, reversibly blocks human muscle-type nicotinic acetylcholine receptors (nAChR) alpha-1-beta-1-epsilon-delta/CHRNA1-CHRNB1-CHRNE-CHRND (EC(50)=0.44 uM) and alpha-1-beta-1-gamma-delta/CHRNA1-CHRNB1-CHRNG-CHRND (EC(50)=1.56 uM). Binds to nAChR from T.californica (IC(50)=0.03-0.18 uM), human neuronal nAChR alpha-7/CHRNA7 (IC(50)=22 uM) and acetylcholine-binding proteins (AChBP) from L.stagnalis (IC(50)=63 uM) and A.californica (IC(50)=230 uM). In Azemiops feae (Fea's viper), this protein is Azemiopsin.